The primary structure comprises 133 residues: Large-conductance mechanosensitive channel (133 aa).

The next 3 membrane-spanning stretches (helical) occupy residues phenylalanine 8–glycine 28, isoleucine 30–isoleucine 50, and glycine 73–isoleucine 93.

This sequence belongs to the MscL family. Homopentamer.

The protein localises to the cell membrane. Its function is as follows. Channel that opens in response to stretch forces in the membrane lipid bilayer. May participate in the regulation of osmotic pressure changes within the cell. This is Large-conductance mechanosensitive channel from Hathewaya histolytica (Clostridium histolyticum).